A 275-amino-acid chain; its full sequence is Tryptophan synthase alpha chain (275 aa).

The active-site Proton acceptor is Glu-51.

Belongs to the TrpA family. As to quaternary structure, tetramer of two alpha and two beta chains.

It carries out the reaction (1S,2R)-1-C-(indol-3-yl)glycerol 3-phosphate + L-serine = D-glyceraldehyde 3-phosphate + L-tryptophan + H2O. It functions in the pathway amino-acid biosynthesis; L-tryptophan biosynthesis; L-tryptophan from chorismate: step 5/5. In terms of biological role, the alpha subunit is responsible for the aldol cleavage of indoleglycerol phosphate to indole and glyceraldehyde 3-phosphate. The protein is Tryptophan synthase alpha chain of Caulobacter vibrioides (strain ATCC 19089 / CIP 103742 / CB 15) (Caulobacter crescentus).